We begin with the raw amino-acid sequence, 172 residues long: Podoplanin (172 aa).

An N-terminal signal peptide occupies residues 1-22; that stretch reads MWTVPVLFWVLGSVWFWDSAQG. Over 23–141 the chain is Extracellular; that stretch reads GTIGVNEDDI…KKDGLPVVTL (119 aa). O-linked (GalNAc...) threonine glycosylation is found at Thr-37, Thr-51, Thr-52, Thr-53, and Thr-56. The disordered stretch occupies residues 49–132; the sequence is KITTTGATGG…AGDETQTTDK (84 aa). Over residues 51–63 the composition is skewed to polar residues; sequence TTTGATGGLNEST. Asn-60 carries N-linked (GlcNAc...) asparagine glycosylation. Residues Thr-63, Thr-71, and Thr-77 are each glycosylated (O-linked (GalNAc...) threonine). Basic and acidic residues predominate over residues 72-81; the sequence is QRERGTKPPL. An O-linked (GalNAc...) serine glycan is attached at Ser-85. An O-linked (GalNAc...) threonine glycan is attached at Thr-86. O-linked (GalNAc...) serine glycosylation is present at Ser-87. Thr-89 is a glycosylation site (O-linked (GalNAc...) threonine). A glycan (O-linked (GalNAc...) serine) is linked at Ser-90. A compositionally biased stretch (basic and acidic residues) spans 90-99; that stretch reads SDHDHREHES. O-linked (GalNAc...) threonine glycosylation is found at Thr-100, Thr-101, Thr-102, Thr-107, and Thr-115. Residues 100–109 show a composition bias toward low complexity; it reads TTTVKVVTSH. Positions 110 to 132 are enriched in basic and acidic residues; sequence SVDKKTSHPNRDNAGDETQTTDK. The chain crosses the membrane as a helical span at residues 142–162; sequence VGIIVGVLLAIGFVGGIFIVV. The segment at 143 to 147 is requires for dimerization and lipidd rafts association; the sequence is GIIVG. Topologically, residues 163–172 are cytoplasmic; that stretch reads MKKISGRFSP. Positions 164–165 are requires for interaction with MSN and EZR; sequence KK.

It belongs to the podoplanin family. As to quaternary structure, homodimer. Interacts with CLEC1B; the interaction is independent of CLEC1B glycosylation and activates CLEC1B; the interaction is dependent of sialic acid on O-glycans. Interacts with CD9; this interaction is homophilic and attenuates platelet aggregation and pulmonary metastasis induced by PDPN. Interacts with LGALS8; the interaction is glycosylation-dependent; may participate in connection of the lymphatic endothelium to the surrounding extracellular matrix. Interacts with HSPA9. Interacts (via extracellular domain) with CD44; this interaction is required for PDPN-mediated directional migration and regulation of lamellipodia extension/stabilization during cell spreading and migration. Interacts (via cytoplasmic domain) with MSN and EZR; activates RHOA and promotes epithelial-mesenchymal transition. Interacts with CCL21; relocalized PDPN to the basolateral membrane. In terms of processing, extensively O-glycosylated. Contains sialic acid residues. O-glycosylation is necessary for platelet aggregation activity. Disialylated at Thr-52; sialic acid is critical for platelet-aggregating activity and for CLEC1B interaction. Phosphorylated by PKA; decreases cell migration. Post-translationally, the N-terminus is blocked. In terms of tissue distribution, detected at high levels in lung and brain, at lower levels in kidney, stomach, liver, spleen and esophagus, and not detected in skin and small intestine. Expressed in epithelial cells of choroid plexus, ependyma, glomerulus and alveolus, in mesothelial cells and in endothelia of lymphatic vessels. Also expressed in stromal cells of peripheral lymphoid tissue and thymic epithelial cells. Detected in carcinoma cell lines and cultured fibroblasts. Expressed at higher levels in colon carcinomas than in normal colon tissue.

It localises to the membrane. It is found in the cell projection. The protein resides in the lamellipodium membrane. The protein localises to the filopodium membrane. Its subcellular location is the microvillus membrane. It localises to the ruffle membrane. It is found in the membrane raft. The protein resides in the apical cell membrane. The protein localises to the basolateral cell membrane. Its subcellular location is the invadopodium. Its function is as follows. Mediates effects on cell migration and adhesion through its different partners. During development plays a role in blood and lymphatic vessels separation by binding CLEC1B, triggering CLEC1B activation in platelets and leading to platelet activation and/or aggregation. Interaction with CD9, on the contrary, attenuates platelet aggregation and pulmonary metastasis induced by PDPN. Mediates effects on cell migration and adhesion through its different partners. Through MSN or EZR interaction promotes epithelial-mesenchymal transition (EMT) leading to ERZ phosphorylation and triggering RHOA activation leading to cell migration increase and invasiveness. Interaction with CD44 promotes directional cell migration in epithelial and tumor cells. In lymph nodes (LNs), controls fibroblastic reticular cells (FRCs) adhesion to the extracellular matrix (ECM) and contraction of the actomyosin by maintaining ERM proteins (EZR; MSN and RDX) and MYL9 activation through association with unknown transmembrane proteins. Engagement of CLEC1B by PDPN promotes FRCs relaxation by blocking lateral membrane interactions leading to reduction of ERM proteins (EZR; MSN and RDX) and MYL9 activation. Through binding with LGALS8 may participate in connection of the lymphatic endothelium to the surrounding extracellular matrix. In keratinocytes, induces changes in cell morphology showing an elongated shape, numerous membrane protrusions, major reorganization of the actin cytoskeleton, increased motility and decreased cell adhesion. Controls invadopodia stability and maturation leading to efficient degradation of the extracellular matrix (ECM) in tumor cells through modulation of RHOC activity in order to activate ROCK1/ROCK2 and LIMK1/LIMK2 and inactivation of CFL1. Required for normal lung cell proliferation and alveolus formation at birth. Does not function as a water channel or as a regulator of aquaporin-type water channels. Does not have any effect on folic acid or amino acid transport. The polypeptide is Podoplanin (Mus musculus (Mouse)).